The chain runs to 363 residues: Peptide chain release factor 1 (363 aa).

An N5-methylglutamine modification is found at Gln237.

Belongs to the prokaryotic/mitochondrial release factor family. Methylated by PrmC. Methylation increases the termination efficiency of RF1.

The protein resides in the cytoplasm. Functionally, peptide chain release factor 1 directs the termination of translation in response to the peptide chain termination codons UAG and UAA. The sequence is that of Peptide chain release factor 1 (prfA) from Mycoplasma capricolum subsp. capricolum (strain California kid / ATCC 27343 / NCTC 10154).